Reading from the N-terminus, the 196-residue chain is CAG pathogenicity island protein 13 (196 aa).

In Helicobacter pylori (strain ATCC 700392 / 26695) (Campylobacter pylori), this protein is CAG pathogenicity island protein 13 (cagS).